The following is a 122-amino-acid chain: UPF0102 protein CPR_1677 (122 aa).

Belongs to the UPF0102 family.

The chain is UPF0102 protein CPR_1677 from Clostridium perfringens (strain SM101 / Type A).